A 269-amino-acid polypeptide reads, in one-letter code: MSDVPGIVVTGGSGRMGRMLIETVRGSDAARLVGVTERPGHDWIGADIGVALGGAAIGVTVTDDPLEAFATAQAVIDFTSPAATVAHAELTAQARAVHVIGTTGFSPADLAHLEAAARHAVIVRAGNMSLGVNLLVKLTEKVAAALDADYDIEVIEAHHRHKVDAPSGTALMLGEAAAAGRGVALADVSDRGRDGITGERKRGDIGFSAIRGGDIVGEHDVLFAAEGERITLRHVASDRSVFARGALKAALWGQDKGPGAYDMMDVLGL.

Residues 11 to 16 (GGSGRM) and glutamate 37 each bind NAD(+). Arginine 38 contacts NADP(+). NAD(+) is bound by residues 101-103 (GTT) and 125-128 (AGNM). The active-site Proton donor/acceptor is histidine 158. Histidine 159 contacts (S)-2,3,4,5-tetrahydrodipicolinate. The active-site Proton donor is the lysine 162. Residue 168–169 (GT) participates in (S)-2,3,4,5-tetrahydrodipicolinate binding.

It belongs to the DapB family.

Its subcellular location is the cytoplasm. The enzyme catalyses (S)-2,3,4,5-tetrahydrodipicolinate + NAD(+) + H2O = (2S,4S)-4-hydroxy-2,3,4,5-tetrahydrodipicolinate + NADH + H(+). The catalysed reaction is (S)-2,3,4,5-tetrahydrodipicolinate + NADP(+) + H2O = (2S,4S)-4-hydroxy-2,3,4,5-tetrahydrodipicolinate + NADPH + H(+). The protein operates within amino-acid biosynthesis; L-lysine biosynthesis via DAP pathway; (S)-tetrahydrodipicolinate from L-aspartate: step 4/4. Functionally, catalyzes the conversion of 4-hydroxy-tetrahydrodipicolinate (HTPA) to tetrahydrodipicolinate. The sequence is that of 4-hydroxy-tetrahydrodipicolinate reductase from Dinoroseobacter shibae (strain DSM 16493 / NCIMB 14021 / DFL 12).